We begin with the raw amino-acid sequence, 121 residues long: Large ribosomal subunit protein bL19 (121 aa).

Belongs to the bacterial ribosomal protein bL19 family.

Its function is as follows. This protein is located at the 30S-50S ribosomal subunit interface and may play a role in the structure and function of the aminoacyl-tRNA binding site. The protein is Large ribosomal subunit protein bL19 of Borreliella burgdorferi (strain ZS7) (Borrelia burgdorferi).